We begin with the raw amino-acid sequence, 274 residues long: Purine nucleoside phosphorylase YlmD (274 aa).

46-47 (LH) is a binding site for inosine. Zn(2+) is bound by residues His-80, Cys-125, His-142, Cys-182, Cys-183, Cys-242, and Cys-245. Arg-262 contacts inosine.

This sequence belongs to the purine nucleoside phosphorylase YfiH/LACC1 family. Requires Zn(2+) as cofactor.

It catalyses the reaction adenosine + phosphate = alpha-D-ribose 1-phosphate + adenine. The enzyme catalyses S-methyl-5'-thioadenosine + phosphate = 5-(methylsulfanyl)-alpha-D-ribose 1-phosphate + adenine. The catalysed reaction is inosine + phosphate = alpha-D-ribose 1-phosphate + hypoxanthine. It carries out the reaction adenosine + H2O + H(+) = inosine + NH4(+). Purine nucleoside enzyme that catalyzes the phosphorolysis of adenosine and inosine nucleosides, yielding D-ribose 1-phosphate and the respective free bases, adenine and hypoxanthine. Also catalyzes the phosphorolysis of S-methyl-5'-thioadenosine into adenine and S-methyl-5-thio-alpha-D-ribose 1-phosphate. Also has adenosine deaminase activity. The protein is Purine nucleoside phosphorylase YlmD of Geobacillus stearothermophilus (strain DSM 13240 / CIP 106956 / 10).